Reading from the N-terminus, the 491-residue chain is Chromosomal replication initiator protein DnaA (491 aa).

The tract at residues 1 to 69 (MTTWDKCLKK…TIQECHGNDL (69 aa)) is domain I, interacts with DnaA modulators. Positions 69–154 (LIIEYSNKKF…KEDEEYSFGL (86 aa)) are domain II. The interval 155-371 (PLKEKYVFDS…GALNRVLTTS (217 aa)) is domain III, AAA+ region. 4 residues coordinate ATP: glycine 199, glycine 201, lysine 202, and threonine 203. Residues 372-491 (KFNHKDPTIE…YELLLDKISR (120 aa)) are domain IV, binds dsDNA.

The protein belongs to the DnaA family. Oligomerizes as a right-handed, spiral filament on DNA at oriC.

Its subcellular location is the cytoplasm. In terms of biological role, plays an essential role in the initiation and regulation of chromosomal replication. ATP-DnaA binds to the origin of replication (oriC) to initiate formation of the DNA replication initiation complex once per cell cycle. Binds the DnaA box (a 9 base pair repeat at the origin) and separates the double-stranded (ds)DNA. Forms a right-handed helical filament on oriC DNA; dsDNA binds to the exterior of the filament while single-stranded (ss)DNA is stabiized in the filament's interior. The ATP-DnaA-oriC complex binds and stabilizes one strand of the AT-rich DNA unwinding element (DUE), permitting loading of DNA polymerase. After initiation quickly degrades to an ADP-DnaA complex that is not apt for DNA replication. Binds acidic phospholipids. The polypeptide is Chromosomal replication initiator protein DnaA (Francisella tularensis subsp. novicida (strain U112)).